Here is a 474-residue protein sequence, read N- to C-terminus: Putative pectinesterase/pectinesterase inhibitor 38 (474 aa).

Residues 1–130 (MVFGNEMCDE…HSLESITIDV (130 aa)) are pectinesterase inhibitor 38. N80 carries N-linked (GlcNAc...) asparagine glycosylation. Residues 164–461 (DVVVAQDGSG…TLPKFIDSAS (298 aa)) are pectinesterase 38. Substrate-binding residues include T241 and Q271. The Proton donor; for pectinesterase activity role is filled by D294. C308 and C328 form a disulfide bridge. D315 serves as the catalytic Nucleophile; for pectinesterase activity. A glycan (N-linked (GlcNAc...) asparagine) is linked at N351. Positions 380 and 382 each coordinate substrate. N409 carries an N-linked (GlcNAc...) asparagine glycan.

This sequence in the N-terminal section; belongs to the PMEI family. The protein in the C-terminal section; belongs to the pectinesterase family.

Its subcellular location is the secreted. The protein localises to the cell wall. It catalyses the reaction [(1-&gt;4)-alpha-D-galacturonosyl methyl ester](n) + n H2O = [(1-&gt;4)-alpha-D-galacturonosyl](n) + n methanol + n H(+). It participates in glycan metabolism; pectin degradation; 2-dehydro-3-deoxy-D-gluconate from pectin: step 1/5. Its function is as follows. Acts in the modification of cell walls via demethylesterification of cell wall pectin. The protein is Putative pectinesterase/pectinesterase inhibitor 38 (PME38) of Arabidopsis thaliana (Mouse-ear cress).